Consider the following 335-residue polypeptide: F420-dependent glucose-6-phosphate dehydrogenase (335 aa).

D40 lines the coenzyme F420-(gamma-Glu)n pocket. Residue H41 is the Proton donor of the active site. Coenzyme F420-(gamma-Glu)n is bound by residues T77 and 108–109 (TG). Residue E110 is the Proton acceptor of the active site. Residues N113, 177–178 (GG), and 180–181 (VV) contribute to the coenzyme F420-(gamma-Glu)n site. Positions 195, 198, 259, and 283 each coordinate substrate.

It belongs to the F420-dependent glucose-6-phosphate dehydrogenase family. Homodimer.

It catalyses the reaction oxidized coenzyme F420-(gamma-L-Glu)(n) + D-glucose 6-phosphate + H(+) = 6-phospho-D-glucono-1,5-lactone + reduced coenzyme F420-(gamma-L-Glu)(n). Catalyzes the coenzyme F420-dependent oxidation of glucose 6-phosphate (G6P) to 6-phosphogluconolactone. This Segniliparus rotundus (strain ATCC BAA-972 / CDC 1076 / CIP 108378 / DSM 44985 / JCM 13578) protein is F420-dependent glucose-6-phosphate dehydrogenase.